The following is a 155-amino-acid chain: DNA-directed RNA polymerase II subunit rpb4 (155 aa).

It belongs to the eukaryotic RPB4 RNA polymerase subunit family. As to quaternary structure, component of the RNA polymerase II (Pol II) complex consisting of 12 subunits. RPB4 and RPB7 form a subcomplex that protrudes from the 10-subunit Pol II core complex.

It is found in the nucleus. In terms of biological role, DNA-dependent RNA polymerase catalyzes the transcription of DNA into RNA using the four ribonucleoside triphosphates as substrates. Component of RNA polymerase II which synthesizes mRNA precursors and many functional non-coding RNAs. Pol II is the central component of the basal RNA polymerase II transcription machinery. It is composed of mobile elements that move relative to each other. RPB4 is part of a subcomplex with RPB7 that binds to a pocket formed by RPB1, RPB2 and RPB6 at the base of the clamp element. The RPB4-RPB7 subcomplex seems to lock the clamp via RPB7 in the closed conformation thus preventing double-stranded DNA to enter the active site cleft. The RPB4-RPB7 subcomplex binds single-stranded DNA and RNA. This chain is DNA-directed RNA polymerase II subunit rpb4 (polr2d), found in Dictyostelium discoideum (Social amoeba).